Consider the following 360-residue polypeptide: MIVWLAELLSSQFTFLNVLTYLSVRTVMAVLTALAFSLFFGPKLIRFLQKFQIGQIVRQDGPESHFSKAGTPTMGGILILGAITFSSLLWARLDNSYVWIVLFTTLAFGAIGFMDDYLKVVRKHPDGLIARWKYFWQSVTALVLAVVLFLSATTPAELTFVMPFFKQYMPYLGLAFIPLVYFTVVGSSNAVNLTDGLDGLAIMPTVMVAAAFALIAYLTSHVNYAHYLYIPYIPKASELVVICGTIVGAGLGFLWFNTYPAQVFMGDVGSLALGALLGVIAVLVRQEILLVIMGGIFVVETLSVILQVGSYKMRKRRIFRMAPIHHHYEKKGWPEPRVIVRFWIITIVLVLIGLVTLKVR.

The next 10 membrane-spanning stretches (helical) occupy residues 27 to 47 (VMAV…LIRF), 71 to 91 (TPTM…LLWA), 98 to 118 (VWIV…DDYL), 142 to 162 (LVLA…TFVM), 168 to 188 (YMPY…VGSS), 199 to 219 (GLAI…AYLT), 236 to 256 (ASEL…FLWF), 263 to 283 (VFMG…IAVL), 288 to 308 (ILLV…ILQV), and 338 to 358 (VIVR…VTLK).

The protein belongs to the glycosyltransferase 4 family. MraY subfamily. The cofactor is Mg(2+).

The protein resides in the cell inner membrane. It catalyses the reaction UDP-N-acetyl-alpha-D-muramoyl-L-alanyl-gamma-D-glutamyl-meso-2,6-diaminopimeloyl-D-alanyl-D-alanine + di-trans,octa-cis-undecaprenyl phosphate = di-trans,octa-cis-undecaprenyl diphospho-N-acetyl-alpha-D-muramoyl-L-alanyl-D-glutamyl-meso-2,6-diaminopimeloyl-D-alanyl-D-alanine + UMP. It participates in cell wall biogenesis; peptidoglycan biosynthesis. Catalyzes the initial step of the lipid cycle reactions in the biosynthesis of the cell wall peptidoglycan: transfers peptidoglycan precursor phospho-MurNAc-pentapeptide from UDP-MurNAc-pentapeptide onto the lipid carrier undecaprenyl phosphate, yielding undecaprenyl-pyrophosphoryl-MurNAc-pentapeptide, known as lipid I. This is Phospho-N-acetylmuramoyl-pentapeptide-transferase from Psychromonas ingrahamii (strain DSM 17664 / CCUG 51855 / 37).